Here is a 62-residue protein sequence, read N- to C-terminus: Sperm protamine P1 (62 aa).

Residues 1 to 62 form a disordered region; sequence MARYRHSXSR…RYSRRRRRRY (62 aa).

It belongs to the protamine P1 family. Testis.

Its subcellular location is the nucleus. It is found in the chromosome. Its function is as follows. Protamines substitute for histones in the chromatin of sperm during the haploid phase of spermatogenesis. They compact sperm DNA into a highly condensed, stable and inactive complex. This chain is Sperm protamine P1 (PRM1), found in Petrogale xanthopus (Yellow-footed rock wallaby).